The sequence spans 217 residues: Dihydroflavonol 4-reductase (217 aa).

Residues lysine 27 and tyrosine 146 each coordinate NADP(+).

This sequence belongs to the NAD(P)-dependent epimerase/dehydratase family. Dihydroflavonol-4-reductase subfamily.

The enzyme catalyses a (2R,3S,4S)-leucoanthocyanidin + NADP(+) = a (2R,3R)-dihydroflavonol + NADPH + H(+). The catalysed reaction is (2S)-flavan-4-ol + NADP(+) = (2S)-flavanone + NADPH + H(+). It participates in pigment biosynthesis; anthocyanin biosynthesis. Bifunctional enzyme involved in flavonoid metabolism. The chain is Dihydroflavonol 4-reductase (DFR1) from Medicago sativa (Alfalfa).